A 185-amino-acid polypeptide reads, in one-letter code: Thymidine kinase (185 aa).

8–15 (GPMYSGKT) is an ATP binding site. E85 (proton acceptor) is an active-site residue. F117 is a substrate binding site. C142 and C145 together coordinate Zn(2+). Substrate is bound at residue 161-165 (IIEIG). Residues C174 and C177 each coordinate Zn(2+).

The protein belongs to the thymidine kinase family.

The enzyme catalyses thymidine + ATP = dTMP + ADP + H(+). This Choristoneura fumiferana entomopoxvirus (CfEPV) protein is Thymidine kinase (TK).